Here is a 348-residue protein sequence, read N- to C-terminus: Methylthioribose-1-phosphate isomerase (348 aa).

Substrate-binding positions include 54-56, R96, and Q199; that span reads RGA. Residue D240 is the Proton donor of the active site. Position 250 to 251 (250 to 251) interacts with substrate; it reads NK.

This sequence belongs to the eIF-2B alpha/beta/delta subunits family. MtnA subfamily.

It carries out the reaction 5-(methylsulfanyl)-alpha-D-ribose 1-phosphate = 5-(methylsulfanyl)-D-ribulose 1-phosphate. It participates in amino-acid biosynthesis; L-methionine biosynthesis via salvage pathway; L-methionine from S-methyl-5-thio-alpha-D-ribose 1-phosphate: step 1/6. Catalyzes the interconversion of methylthioribose-1-phosphate (MTR-1-P) into methylthioribulose-1-phosphate (MTRu-1-P). This chain is Methylthioribose-1-phosphate isomerase, found in Thioalkalivibrio sulfidiphilus (strain HL-EbGR7).